A 72-amino-acid polypeptide reads, in one-letter code: Large ribosomal subunit protein uL29 (72 aa).

This sequence belongs to the universal ribosomal protein uL29 family.

In Chlamydia abortus (strain DSM 27085 / S26/3) (Chlamydophila abortus), this protein is Large ribosomal subunit protein uL29.